Reading from the N-terminus, the 612-residue chain is MPKYRSSTTTQGPNMSGARALWRATGMSSDDFNKPIIAVVNSFTEFVPGHIHLRELGQLVSQYIISSGGVSKEFNTIAIDDGIAMGHSGMLYSLPSRDLIADSVEFMINAHCVDAMVCISNCDKITPGMLMAALRLNIPCVFVSGGPMESGKIVISDKEIKLNLVDAITCGVNPDSSDDMINEIEKSACPTCGSCSGMFTANSMNCLMEAIGLSLPGNGTILATHIDRKKLFVQAGKLIVKITQEYYKNNNEKFLPRNVATKEAFCNAMALDIAMGGSTNTVLHLLAAAREGCVDFTMLDVDLLSRKIPNLCKLSPNTTFYHIEDFHRAGGVFGVLDELNKVNLLYKQTFNILGLNLEEMLSKYSILTGNDKNIIKMFYAAPSGQKTIKPFSQSCRWNSLDIDRKLGCIRDYNSAFSLDGGIAVLYGNLAKDGCIVKTAGVHEKNLIFRGKAVVYESQDEAVHAILNNKIVKGNVIIIRYEGPKGGPGMQEMLYPTSYLKSMKLDQDCALITDGRFSGGTSGLSIGHISPEAANQGIIALVRTGDFIDINIPNRKIHLDITDNELLLRIKNEKDRGIDAYTPSHRKRIVTSALKLYSKFVTSADKGAVRNIR.

D81 provides a ligand contact to Mg(2+). A [2Fe-2S] cluster-binding site is contributed by C122. D123 and K124 together coordinate Mg(2+). An N6-carboxylysine modification is found at K124. Position 195 (C195) interacts with [2Fe-2S] cluster. Residue E491 participates in Mg(2+) binding. The active-site Proton acceptor is S517.

This sequence belongs to the IlvD/Edd family. Homodimer. It depends on [2Fe-2S] cluster as a cofactor. Mg(2+) serves as cofactor.

It carries out the reaction (2R)-2,3-dihydroxy-3-methylbutanoate = 3-methyl-2-oxobutanoate + H2O. The catalysed reaction is (2R,3R)-2,3-dihydroxy-3-methylpentanoate = (S)-3-methyl-2-oxopentanoate + H2O. Its pathway is amino-acid biosynthesis; L-isoleucine biosynthesis; L-isoleucine from 2-oxobutanoate: step 3/4. It participates in amino-acid biosynthesis; L-valine biosynthesis; L-valine from pyruvate: step 3/4. Functionally, functions in the biosynthesis of branched-chain amino acids. Catalyzes the dehydration of (2R,3R)-2,3-dihydroxy-3-methylpentanoate (2,3-dihydroxy-3-methylvalerate) into 2-oxo-3-methylpentanoate (2-oxo-3-methylvalerate) and of (2R)-2,3-dihydroxy-3-methylbutanoate (2,3-dihydroxyisovalerate) into 2-oxo-3-methylbutanoate (2-oxoisovalerate), the penultimate precursor to L-isoleucine and L-valine, respectively. The sequence is that of Dihydroxy-acid dehydratase from Buchnera aphidicola subsp. Baizongia pistaciae (strain Bp).